The primary structure comprises 280 residues: 4-diphosphocytidyl-2-C-methyl-D-erythritol kinase (280 aa).

Lys-8 is an active-site residue. 91–101 (PVSAGLAGGST) provides a ligand contact to ATP. Asp-133 is a catalytic residue.

The protein belongs to the GHMP kinase family. IspE subfamily.

It carries out the reaction 4-CDP-2-C-methyl-D-erythritol + ATP = 4-CDP-2-C-methyl-D-erythritol 2-phosphate + ADP + H(+). Its pathway is isoprenoid biosynthesis; isopentenyl diphosphate biosynthesis via DXP pathway; isopentenyl diphosphate from 1-deoxy-D-xylulose 5-phosphate: step 3/6. Its function is as follows. Catalyzes the phosphorylation of the position 2 hydroxy group of 4-diphosphocytidyl-2C-methyl-D-erythritol. The protein is 4-diphosphocytidyl-2-C-methyl-D-erythritol kinase of Clostridium botulinum (strain Alaska E43 / Type E3).